The chain runs to 133 residues: Small ribosomal subunit protein uS8 (133 aa).

It belongs to the universal ribosomal protein uS8 family. In terms of assembly, part of the 30S ribosomal subunit. Contacts proteins S5 and S12.

Its function is as follows. One of the primary rRNA binding proteins, it binds directly to 16S rRNA central domain where it helps coordinate assembly of the platform of the 30S subunit. The sequence is that of Small ribosomal subunit protein uS8 from Chlamydia pneumoniae (Chlamydophila pneumoniae).